The chain runs to 192 residues: Thymidine kinase (192 aa).

Residues 9-16 (SAMNAGKS) and 87-90 (DECQ) each bind ATP. E88 (proton acceptor) is an active-site residue. Residues C145, C147, C182, and H185 each contribute to the Zn(2+) site.

The protein belongs to the thymidine kinase family. In terms of assembly, homotetramer.

The protein resides in the cytoplasm. The catalysed reaction is thymidine + ATP = dTMP + ADP + H(+). In Shewanella oneidensis (strain ATCC 700550 / JCM 31522 / CIP 106686 / LMG 19005 / NCIMB 14063 / MR-1), this protein is Thymidine kinase.